We begin with the raw amino-acid sequence, 735 residues long: DNA ligase 1 (735 aa).

The segment covering 1-11 has biased composition (basic and acidic residues); sequence MAGDKQGDKQA. The interval 1 to 23 is disordered; sequence MAGDKQGDKQAETTSVPAEARER. NAD(+) is bound by residues 48–52, 97–98, and Glu-128; these read DAEFD and SL. The active-site N6-AMP-lysine intermediate is Lys-130. Residues Arg-151, Glu-188, Lys-305, and Lys-329 each coordinate NAD(+). Zn(2+) contacts are provided by Cys-423, Cys-426, Cys-442, and Cys-448. The BRCT domain occupies 643–732; the sequence is EGPRPLEGLT…PEAAADVALS (90 aa).

The protein belongs to the NAD-dependent DNA ligase family. LigA subfamily. It depends on Mg(2+) as a cofactor. Mn(2+) serves as cofactor.

It catalyses the reaction NAD(+) + (deoxyribonucleotide)n-3'-hydroxyl + 5'-phospho-(deoxyribonucleotide)m = (deoxyribonucleotide)n+m + AMP + beta-nicotinamide D-nucleotide.. Its function is as follows. DNA ligase that catalyzes the formation of phosphodiester linkages between 5'-phosphoryl and 3'-hydroxyl groups in double-stranded DNA using NAD as a coenzyme and as the energy source for the reaction. It is essential for DNA replication and repair of damaged DNA. The polypeptide is DNA ligase 1 (Streptomyces coelicolor (strain ATCC BAA-471 / A3(2) / M145)).